Consider the following 284-residue polypeptide: 4-diphosphocytidyl-2-C-methyl-D-erythritol kinase (284 aa).

The active site involves Lys-14. 98 to 108 (PMGGGLGGGSS) is an ATP binding site. Asp-140 is an active-site residue.

It belongs to the GHMP kinase family. IspE subfamily.

It carries out the reaction 4-CDP-2-C-methyl-D-erythritol + ATP = 4-CDP-2-C-methyl-D-erythritol 2-phosphate + ADP + H(+). Its pathway is isoprenoid biosynthesis; isopentenyl diphosphate biosynthesis via DXP pathway; isopentenyl diphosphate from 1-deoxy-D-xylulose 5-phosphate: step 3/6. Its function is as follows. Catalyzes the phosphorylation of the position 2 hydroxy group of 4-diphosphocytidyl-2C-methyl-D-erythritol. This chain is 4-diphosphocytidyl-2-C-methyl-D-erythritol kinase, found in Shewanella halifaxensis (strain HAW-EB4).